The primary structure comprises 349 residues: Mannonate dehydratase (349 aa).

This sequence belongs to the mannonate dehydratase family. Fe(2+) serves as cofactor. It depends on Mn(2+) as a cofactor.

It catalyses the reaction D-mannonate = 2-dehydro-3-deoxy-D-gluconate + H2O. It participates in carbohydrate metabolism; pentose and glucuronate interconversion. Functionally, catalyzes the dehydration of D-mannonate. The chain is Mannonate dehydratase from Oceanobacillus iheyensis (strain DSM 14371 / CIP 107618 / JCM 11309 / KCTC 3954 / HTE831).